Reading from the N-terminus, the 106-residue chain is NADH-quinone oxidoreductase subunit K (106 aa).

3 helical membrane-spanning segments follow: residues 10–30, 35–55, and 67–87; these read IHYYLILAMIIFTIGVAGVMV, VLIFMSVELILNSVNLVFVTF, and VVFFVMAIAAAEAAIGLAIVI.

Belongs to the complex I subunit 4L family. NDH-1 is composed of 14 different subunits. Subunits NuoA, H, J, K, L, M, N constitute the membrane sector of the complex.

The protein resides in the cell inner membrane. The catalysed reaction is a quinone + NADH + 5 H(+)(in) = a quinol + NAD(+) + 4 H(+)(out). Its function is as follows. NDH-1 shuttles electrons from NADH, via FMN and iron-sulfur (Fe-S) centers, to quinones in the respiratory chain. The immediate electron acceptor for the enzyme in this species is believed to be ubiquinone. Couples the redox reaction to proton translocation (for every two electrons transferred, four hydrogen ions are translocated across the cytoplasmic membrane), and thus conserves the redox energy in a proton gradient. The sequence is that of NADH-quinone oxidoreductase subunit K from Leptospira borgpetersenii serovar Hardjo-bovis (strain JB197).